Reading from the N-terminus, the 206-residue chain is LexA repressor (206 aa).

The segment at residues 28 to 48 is a DNA-binding region (H-T-H motif); the sequence is RAEIATRLGFKSANAAEEHLK. Active-site for autocatalytic cleavage activity residues include Ser123 and Lys160.

Belongs to the peptidase S24 family. Homodimer.

The enzyme catalyses Hydrolysis of Ala-|-Gly bond in repressor LexA.. Its function is as follows. Represses a number of genes involved in the response to DNA damage (SOS response), including recA and lexA. In the presence of single-stranded DNA, RecA interacts with LexA causing an autocatalytic cleavage which disrupts the DNA-binding part of LexA, leading to derepression of the SOS regulon and eventually DNA repair. The sequence is that of LexA repressor from Shewanella sp. (strain MR-4).